The following is a 485-amino-acid chain: Glutamyl-tRNA(Gln) amidotransferase subunit A (485 aa).

Active-site charge relay system residues include Lys79 and Ser154. Catalysis depends on Ser178, which acts as the Acyl-ester intermediate.

Belongs to the amidase family. GatA subfamily. Heterotrimer of A, B and C subunits.

The catalysed reaction is L-glutamyl-tRNA(Gln) + L-glutamine + ATP + H2O = L-glutaminyl-tRNA(Gln) + L-glutamate + ADP + phosphate + H(+). In terms of biological role, allows the formation of correctly charged Gln-tRNA(Gln) through the transamidation of misacylated Glu-tRNA(Gln) in organisms which lack glutaminyl-tRNA synthetase. The reaction takes place in the presence of glutamine and ATP through an activated gamma-phospho-Glu-tRNA(Gln). The sequence is that of Glutamyl-tRNA(Gln) amidotransferase subunit A from Staphylococcus aureus (strain USA300 / TCH1516).